The chain runs to 300 residues: MEKTQETVQRILLEPYKYLLQLPGKQVRTKLSQAFNHWLKVPEDKLQIIIEVTEMLHNASLLIDDIEDNSKLRRGFPVAHSIYGIPSVINSANYVYFLGLEKVLTLNHPDAVKLFTRQLLELHQGQGLDIYWRDNYTCPTEEEYKAMVLQKTGGLFGLAVGLMQLFSDYKEDLKPLLDTLGLFFQIRDDYANLHSKEYSENKSFCEDLTEGKFSFPTIHAIWSRPESTQVQNILRQRTENIDIKKYCVHYLENVGSFEYTRNTLKELESKAYKQIDARGGNPELVALIKHLSKMFKEENE.

N-acetylmethionine is present on Met-1. Residues Lys-25, Arg-28, and His-57 each contribute to the isopentenyl diphosphate site. Positions 64 and 68 each coordinate Mg(2+). Arg-73 is a binding site for dimethylallyl diphosphate. Arg-74 provides a ligand contact to isopentenyl diphosphate. Dimethylallyl diphosphate is bound by residues Lys-151, Thr-152, Gln-185, Lys-202, and Lys-212.

This sequence belongs to the FPP/GGPP synthase family. Homohexamer; trimer of homodimers. Mg(2+) serves as cofactor.

Its subcellular location is the cytoplasm. It localises to the perinuclear region. The protein resides in the myofibril. The protein localises to the sarcomere. It is found in the z line. The enzyme catalyses isopentenyl diphosphate + dimethylallyl diphosphate = (2E)-geranyl diphosphate + diphosphate. It catalyses the reaction isopentenyl diphosphate + (2E)-geranyl diphosphate = (2E,6E)-farnesyl diphosphate + diphosphate. It carries out the reaction isopentenyl diphosphate + (2E,6E)-farnesyl diphosphate = (2E,6E,10E)-geranylgeranyl diphosphate + diphosphate. Its pathway is isoprenoid biosynthesis; farnesyl diphosphate biosynthesis; farnesyl diphosphate from geranyl diphosphate and isopentenyl diphosphate: step 1/1. The protein operates within isoprenoid biosynthesis; geranyl diphosphate biosynthesis; geranyl diphosphate from dimethylallyl diphosphate and isopentenyl diphosphate: step 1/1. It participates in isoprenoid biosynthesis; geranylgeranyl diphosphate biosynthesis; geranylgeranyl diphosphate from farnesyl diphosphate and isopentenyl diphosphate: step 1/1. Catalyzes the trans-addition of the three molecules of IPP onto DMAPP to form geranylgeranyl pyrophosphate, an important precursor of carotenoids and geranylated proteins. The sequence is that of Geranylgeranyl pyrophosphate synthase (GGPS1) from Bos taurus (Bovine).